An 882-amino-acid polypeptide reads, in one-letter code: Leucine--tRNA ligase (882 aa).

Positions 43-53 (PYPSGRIHMGH) match the 'HIGH' region motif. The short motif at 634 to 638 (KMSKS) is the 'KMSKS' region element. Lysine 637 contributes to the ATP binding site.

Belongs to the class-I aminoacyl-tRNA synthetase family.

It is found in the cytoplasm. It catalyses the reaction tRNA(Leu) + L-leucine + ATP = L-leucyl-tRNA(Leu) + AMP + diphosphate. This is Leucine--tRNA ligase from Rhodopseudomonas palustris (strain BisB18).